The primary structure comprises 118 residues: Large ribosomal subunit protein bL19 (118 aa).

The protein belongs to the bacterial ribosomal protein bL19 family.

In terms of biological role, this protein is located at the 30S-50S ribosomal subunit interface and may play a role in the structure and function of the aminoacyl-tRNA binding site. The protein is Large ribosomal subunit protein bL19 of Frankia alni (strain DSM 45986 / CECT 9034 / ACN14a).